A 339-amino-acid chain; its full sequence is Fructose-1,6-bisphosphatase class 1 (339 aa).

Glu94, Asp116, Leu118, and Asp119 together coordinate Mg(2+). Substrate-binding positions include 119–122 (DGSS), Asn210, and Lys276. A Mg(2+)-binding site is contributed by Glu282.

It belongs to the FBPase class 1 family. Homotetramer. Mg(2+) is required as a cofactor.

Its subcellular location is the cytoplasm. The catalysed reaction is beta-D-fructose 1,6-bisphosphate + H2O = beta-D-fructose 6-phosphate + phosphate. It participates in carbohydrate biosynthesis; gluconeogenesis. This Burkholderia ambifaria (strain MC40-6) protein is Fructose-1,6-bisphosphatase class 1.